The primary structure comprises 599 residues: Laccase-2 (599 aa).

An N-terminal signal peptide occupies residues 1-19; the sequence is MARSTTSLFALSLVASAFA. Plastocyanin-like domains are found at residues 21-145 and 157-307; these read VVDY…IVIY and VDDE…LVYE. Cu cation is bound by residues H82, H84, H127, and H129. C103 and C588 form a disulfide bridge. Residues N207, N208, N231, N397, and N443 are each glycosylated (N-linked (GlcNAc...) asparagine). The region spanning 450 to 567 is the Plastocyanin-like 3 domain; sequence DVPTLLKILT…EGFAMVFAEA (118 aa). Positions 497, 500, 502, 549, 550, 551, and 555 each coordinate Cu cation.

This sequence belongs to the multicopper oxidase family. As to quaternary structure, homodimer. Requires Cu cation as cofactor. In mycelia, at a lower level than LCC4.

The protein localises to the secreted. The enzyme catalyses 4 hydroquinone + O2 = 4 benzosemiquinone + 2 H2O. Lignin degradation and detoxification of lignin-derived products. The polypeptide is Laccase-2 (LCC2) (Thanatephorus cucumeris (Black scurf of potato)).